We begin with the raw amino-acid sequence, 340 residues long: uncharacterized protein (340 aa).

Residues 6 to 70 form an RING-CH-type zinc finger; that stretch reads KYEKSSARCW…PQCLTAYRIA (65 aa). Zn(2+) contacts are provided by cysteine 14, cysteine 17, cysteine 37, cysteine 39, histidine 44, cysteine 47, cysteine 60, and cysteine 63. The next 3 helical transmembrane spans lie at 249 to 269, 274 to 294, and 300 to 320; these read EFWI…TKIL, PILL…GNFT, and IIGA…FIAW.

The protein localises to the membrane. This is an uncharacterized protein from Schizosaccharomyces pombe (strain 972 / ATCC 24843) (Fission yeast).